A 121-amino-acid chain; its full sequence is ATP synthase epsilon chain (121 aa).

Belongs to the ATPase epsilon chain family. As to quaternary structure, F-type ATPases have 2 components, CF(1) - the catalytic core - and CF(0) - the membrane proton channel. CF(1) has five subunits: alpha(3), beta(3), gamma(1), delta(1), epsilon(1). CF(0) has three main subunits: a, b and c.

It localises to the cell membrane. Produces ATP from ADP in the presence of a proton gradient across the membrane. The polypeptide is ATP synthase epsilon chain (Mycobacterium avium (strain 104)).